The chain runs to 262 residues: 3-methyl-2-oxobutanoate hydroxymethyltransferase (262 aa).

Mg(2+) contacts are provided by Asp-42 and Asp-81. 3-methyl-2-oxobutanoate-binding positions include Asp-42–Ser-43, Asp-81, and Lys-110. Glu-112 is a Mg(2+) binding site. Residue Glu-180 is the Proton acceptor of the active site.

It belongs to the PanB family. As to quaternary structure, homodecamer; pentamer of dimers. Mg(2+) is required as a cofactor.

It localises to the cytoplasm. It carries out the reaction 3-methyl-2-oxobutanoate + (6R)-5,10-methylene-5,6,7,8-tetrahydrofolate + H2O = 2-dehydropantoate + (6S)-5,6,7,8-tetrahydrofolate. The protein operates within cofactor biosynthesis; (R)-pantothenate biosynthesis; (R)-pantoate from 3-methyl-2-oxobutanoate: step 1/2. In terms of biological role, catalyzes the reversible reaction in which hydroxymethyl group from 5,10-methylenetetrahydrofolate is transferred onto alpha-ketoisovalerate to form ketopantoate. This chain is 3-methyl-2-oxobutanoate hydroxymethyltransferase, found in Legionella pneumophila (strain Corby).